Reading from the N-terminus, the 280-residue chain is Phosphonates import ATP-binding protein PhnC (280 aa).

In terms of domain architecture, ABC transporter spans Phe2–Lys245. An ATP-binding site is contributed by Gly34 to Ser41. Residues Thr257–His280 form a disordered region. The span at Glu260–Ser269 shows a compositional bias: basic and acidic residues.

It belongs to the ABC transporter superfamily. Phosphonates importer (TC 3.A.1.9.1) family. In terms of assembly, the complex is composed of two ATP-binding proteins (PhnC), two transmembrane proteins (PhnE) and a solute-binding protein (PhnD).

Its subcellular location is the cell inner membrane. The catalysed reaction is phosphonate(out) + ATP + H2O = phosphonate(in) + ADP + phosphate + H(+). Part of the ABC transporter complex PhnCDE involved in phosphonates import. Responsible for energy coupling to the transport system. The polypeptide is Phosphonates import ATP-binding protein PhnC (Rhizobium johnstonii (strain DSM 114642 / LMG 32736 / 3841) (Rhizobium leguminosarum bv. viciae)).